A 121-amino-acid polypeptide reads, in one-letter code: Large ribosomal subunit protein bL20 (121 aa).

The protein belongs to the bacterial ribosomal protein bL20 family.

Its function is as follows. Binds directly to 23S ribosomal RNA and is necessary for the in vitro assembly process of the 50S ribosomal subunit. It is not involved in the protein synthesizing functions of that subunit. This is Large ribosomal subunit protein bL20 from Sphingopyxis alaskensis (strain DSM 13593 / LMG 18877 / RB2256) (Sphingomonas alaskensis).